The following is a 286-amino-acid chain: Probable endonuclease 4 (286 aa).

Zn(2+) is bound by residues His-72, His-112, Glu-147, Asp-181, His-184, His-215, Asp-228, His-230, and Glu-260.

This sequence belongs to the AP endonuclease 2 family. Zn(2+) serves as cofactor.

It catalyses the reaction Endonucleolytic cleavage to 5'-phosphooligonucleotide end-products.. In terms of biological role, endonuclease IV plays a role in DNA repair. It cleaves phosphodiester bonds at apurinic or apyrimidinic (AP) sites, generating a 3'-hydroxyl group and a 5'-terminal sugar phosphate. This is Probable endonuclease 4 from Mycoplasma pneumoniae (strain ATCC 29342 / M129 / Subtype 1) (Mycoplasmoides pneumoniae).